The primary structure comprises 629 residues: Nicotinic receptor-associated protein 1 (629 aa).

2 C2 domains span residues 1–144 and 162–299; these read MNQP…KAHL and RTGS…ELLL. The Ca(2+) site is built by Asp-33, Asp-39, Asp-108, Asp-110, Asp-122, Asp-192, Asp-198, Asp-254, Asp-256, and Asp-274. The VWFA domain occupies 342–561; the sequence is EFAVAVDFTA…LDPDVVQENL (220 aa). Disordered regions lie at residues 581–600 and 607–629; these read GFQP…PPDY and IGRR…PPMY.

It belongs to the copine family. Interacts with nicotinic acetylcholine receptor. The cofactor is Ca(2+).

The protein resides in the cell membrane. Functionally, exhibits calcium-dependent phospholipid binding properties. May function in membrane trafficking. Regulates synaptic levels of nicotinic acetylcholine receptor subunit lev-1 and unc-38 in the nerve cord. Involved in nicotinic acetylcholine receptor (nAChR)-mediated sensitivity to nicotine and levamisole. Affects directional sperm motility. The chain is Nicotinic receptor-associated protein 1 from Caenorhabditis briggsae.